The primary structure comprises 574 residues: Peptidyl-prolyl cis-trans isomerase FKBP9 (574 aa).

The first 26 residues, 1–26 (MAIRARSWRPPPPPLLLLLLWVTGQA), serve as a signal peptide directing secretion. PPIase FKBP-type domains are found at residues 58–146 (GDFV…MDIW), 170–258 (SDFV…LDLH), 282–369 (GDFL…IDFH), and 393–481 (GDYL…LELV). 4 N-linked (GlcNAc...) asparagine glycosylation sites follow: N178, N290, N306, and N401. 2 EF-hand domains span residues 492–527 (WNGE…QVAS) and 537–572 (DAEM…TKHD). Residues D505, D507, D509, E511, E516, D550, N552, D554, K556, and E561 each contribute to the Ca(2+) site. A Prevents secretion from ER motif is present at residues 571–574 (HDEL).

In terms of processing, phosphorylated.

The protein localises to the endoplasmic reticulum. The catalysed reaction is [protein]-peptidylproline (omega=180) = [protein]-peptidylproline (omega=0). Its activity is regulated as follows. Inhibited by FK506. Its function is as follows. PPIases accelerate the folding of proteins during protein synthesis. This chain is Peptidyl-prolyl cis-trans isomerase FKBP9 (FKBP9), found in Bos taurus (Bovine).